The primary structure comprises 323 residues: Quinolinate synthase (323 aa).

Residues His-39 and Ser-56 each coordinate iminosuccinate. Cys-101 is a [4Fe-4S] cluster binding site. Residues 127–129 (YIN) and Ser-144 each bind iminosuccinate. Cys-187 provides a ligand contact to [4Fe-4S] cluster. Residues 213–215 (HPE) and Thr-230 contribute to the iminosuccinate site. Cys-280 is a binding site for [4Fe-4S] cluster.

Belongs to the quinolinate synthase family. Type 2 subfamily. Requires [4Fe-4S] cluster as cofactor.

The protein resides in the cytoplasm. The catalysed reaction is iminosuccinate + dihydroxyacetone phosphate = quinolinate + phosphate + 2 H2O + H(+). Its pathway is cofactor biosynthesis; NAD(+) biosynthesis; quinolinate from iminoaspartate: step 1/1. In terms of biological role, catalyzes the condensation of iminoaspartate with dihydroxyacetone phosphate to form quinolinate. The protein is Quinolinate synthase of Chlorobium phaeobacteroides (strain DSM 266 / SMG 266 / 2430).